We begin with the raw amino-acid sequence, 68 residues long: Conotoxin TsMMSK-021 (68 aa).

An N-terminal signal peptide occupies residues 1-20 (MMSKLGVLLTICLLLFPLTA). Residues 21–50 (VPLDGDQHADRPADRMQDISSEQHPLFDPV) constitute a propeptide that is removed on maturation. Disulfide bonds link cysteine 53–cysteine 66, cysteine 54–cysteine 62, and cysteine 58–cysteine 65. Proline 64 carries the 4-hydroxyproline modification.

The protein belongs to the conotoxin M superfamily. In terms of tissue distribution, expressed by the venom duct.

Its subcellular location is the secreted. This Conus tessulatus (Tessellate cone) protein is Conotoxin TsMMSK-021.